Reading from the N-terminus, the 104-residue chain is AVIToxin-VAR1 (104 aa).

The signal sequence occupies residues Met-1 to Ser-19. 5 cysteine pairs are disulfide-bonded: Cys-26–Cys-38, Cys-32–Cys-50, Cys-37–Cys-78, Cys-60–Cys-86, and Cys-80–Cys-96.

This sequence belongs to the AVIT (prokineticin) family. In terms of tissue distribution, expressed by the venom gland.

Its subcellular location is the secreted. Its function is as follows. Potent agonist for both PKR1/PROKR1 and PKR2/PROKR2. Potently contracts gastrointestinal (GI) smooth muscle. The protein is AVIToxin-VAR1 of Varanus varius (Lace monitor lizard).